The following is a 201-amino-acid chain: Ras-related protein Rab-1B (201 aa).

M1 is subject to N-acetylmethionine. GTP contacts are provided by S17, G18, V19, G20, K21, S22, C23, Y33, T34, E35, S36, S39, and T40. S22 is a Mg(2+) binding site. The Switch 1 signature appears at 30–45 (DDTYTESYISTIGVDF). Mg(2+) contacts are provided by T40 and D63. Positions 64-83 (TAGQERFRTITSSYYRGAHG) are switch 2 region; required for interaction with REP1/CHM. Residues 65–80 (AGQERFRTITSSYYRG) carry the Switch 2 motif. Residue G66 participates in GTP binding. S76 carries the (Microbial infection) O-(2-cholinephosphoryl)serine modification. The residue at position 77 (Y77) is a (Microbial infection) O-AMP-tyrosine. Residues N121, K122, D124, S151, A152, and K153 each contribute to the GTP site. Residues 174 to 201 (GPGAASGGERPNLKIDSTPVKPAGGGCC) form a disordered region. S-geranylgeranyl cysteine attachment occurs at residues C200 and C201. A Cysteine methyl ester modification is found at C201.

The protein belongs to the small GTPase superfamily. Rab family. In terms of assembly, interacts with MICAL1 and MICAL2. Interacts (in GTP-bound form) with MICALCL, MICAL1 and MILCAL3. Interacts with GDI1; the interaction requires the GDP-bound state. Interacts with CHM/REP1; the interaction requires the GDP-bound form and is necessary for prenylation by GGTase II. Interacts with RabGAP TBC1D20. Interacts (in GDP-bound form) with lipid phosphatase MTMR6 (via GRAM domain); the interaction regulates MTMR6 recruitment to the endoplasmic reticulum-Golgi intermediate compartment. Interacts (in GDP-bound form) with lipid phosphatase MTMR7. As to quaternary structure, (Microbial infection) Interacts with L.pneumophila AnkX. Interacts with L.pneumophila Lem3. Interacts with L.pneumophila SidD. Interacts with L.pneumophila DrrA. Mg(2+) is required as a cofactor. Prenylated; by GGTase II, only after interaction of the substrate with Rab escort protein 1 (REP1). Post-translationally, (Microbial infection) AMPylation at Tyr-77 by L.pneumophila DrrA occurs in the switch 2 region and leads to moderate inactivation of the GTPase activity. It appears to prolong the lifetime of the GTP state of RAB1B by restricting access of GTPase effectors to switch 2 and blocking effector-stimulated GTP hydrolysis, thereby rendering RAB1B constitutively active. It is later de-AMPylated by L.pneumophila SidD, releasing RAB1B from bacterial phagosomes. In terms of processing, (Microbial infection) Phosphocholinated at Ser-76 by L.pneumophila AnkX, leading to displace GDP dissociation inhibitors (GDI). Both GDP-bound and GTP-bound forms can be phosphocholinated. Dephosphocholinated by L.pneumophila Lem3, restoring accessibility to L.pneumophila GTPase effector LepB. (Microbial infection) Glycosylated by S.typhimurium protein Ssek3: arginine GlcNAcylation prevents GTPase activity, thereby disrupting vesicular protein transport from the endoplasmic reticulum (ER) to the Golgi compartment.

Its subcellular location is the cytoplasm. It localises to the membrane. The protein localises to the preautophagosomal structure membrane. It is found in the perinuclear region. The enzyme catalyses GTP + H2O = GDP + phosphate + H(+). With respect to regulation, regulated by guanine nucleotide exchange factors (GEFs) which promote the exchange of bound GDP for free GTP. Regulated by GTPase activating proteins (GAPs) including TBC1D20 which increases the GTP hydrolysis activity. Inhibited by GDP dissociation inhibitors (GDIs). The small GTPases Rab are key regulators of intracellular membrane trafficking, from the formation of transport vesicles to their fusion with membranes. Rabs cycle between an inactive GDP-bound form and an active GTP-bound form that is able to recruit to membranes different set of downstream effectors directly responsible for vesicle formation, movement, tethering and fusion. Plays a role in the initial events of the autophagic vacuole development which take place at specialized regions of the endoplasmic reticulum. Regulates vesicular transport between the endoplasmic reticulum and successive Golgi compartments. Required to modulate the compacted morphology of the Golgi. Promotes the recruitment of lipid phosphatase MTMR6 to the endoplasmic reticulum-Golgi intermediate compartment. This Homo sapiens (Human) protein is Ras-related protein Rab-1B.